A 233-amino-acid polypeptide reads, in one-letter code: Large ribosomal subunit protein uL1 (233 aa).

This sequence belongs to the universal ribosomal protein uL1 family. In terms of assembly, part of the 50S ribosomal subunit.

Functionally, binds directly to 23S rRNA. The L1 stalk is quite mobile in the ribosome, and is involved in E site tRNA release. Its function is as follows. Protein L1 is also a translational repressor protein, it controls the translation of the L11 operon by binding to its mRNA. The sequence is that of Large ribosomal subunit protein uL1 from Syntrophomonas wolfei subsp. wolfei (strain DSM 2245B / Goettingen).